A 90-amino-acid chain; its full sequence is Putative Fis-like DNA-binding protein (90 aa).

Residues 66–85 (QSRAAALLGIHRATLRKKLK) constitute a DNA-binding region (H-T-H motif).

This sequence belongs to the transcriptional regulatory Fis family.

The chain is Putative Fis-like DNA-binding protein from Xylella fastidiosa (strain Temecula1 / ATCC 700964).